Here is a 154-residue protein sequence, read N- to C-terminus: Protein X (154 aa).

The segment at 68–117 is mitochondrial targeting sequence; sequence PCALRFTSARRMETTVNAHQILPKVLHKRTLGLSAMSTTDLEAYFKDCLF.

The protein belongs to the orthohepadnavirus protein X family. May form homodimer. May interact with host CEBPA, CFLAR, CREB1, DDB1, E4F1, HBXIP, HSPD1/HSP60, NFKBIA, POLR2E and SMAD4. Interacts with host SMC5-SMC6 complex and induces its degradation. Interacts with host TRPC4AP; leading to prevent ubiquitination of TRPC4AP. Interacts with host PLSCR1; this interaction promotes ubiquitination and degradation of HBx and impairs HBx-mediated cell proliferation. A fraction may be phosphorylated in insect cells and HepG2 cells, a human hepatoblastoma cell line. Phosphorylated in vitro by host protein kinase C or mitogen-activated protein kinase. N-acetylated in insect cells.

The protein resides in the host cytoplasm. It is found in the host nucleus. The protein localises to the host mitochondrion. In terms of biological role, multifunctional protein that plays a role in silencing host antiviral defenses and promoting viral transcription. Does not seem to be essential for HBV infection. May be directly involved in development of cirrhosis and liver cancer (hepatocellular carcinoma). Most of cytosolic activities involve modulation of cytosolic calcium. The effect on apoptosis is controversial depending on the cell types in which the studies have been conducted. May induce apoptosis by localizing in mitochondria and causing loss of mitochondrial membrane potential. May also modulate apoptosis by binding host CFLAR, a key regulator of the death-inducing signaling complex (DISC). Promotes viral transcription by using the host E3 ubiquitin ligase DDB1 to target the SMC5-SMC6 complex to proteasomal degradation. This host complex would otherwise bind to viral episomal DNA, and prevents its transcription. Moderately stimulates transcription of many different viral and cellular transcription elements. Promoters and enhancers stimulated by HBx contain DNA binding sites for NF-kappa-B, AP-1, AP-2, c-EBP, ATF/CREB, or the calcium-activated factor NF-AT. In Hepatitis B virus genotype D subtype ayw (isolate France/Tiollais/1979) (HBV-D), this protein is Protein X.